A 181-amino-acid chain; its full sequence is Adenylate kinase 2 (181 aa).

10–15 (GSGKST) contributes to the ATP binding site. Positions 30–59 (SMGGILREAIANATPLGIKAKPYVERGDLL) are NMP. AMP is bound by residues arginine 36, 57–59 (DLL), 85–88 (GYPR), and glutamine 92. Positions 126–132 (NRSLFDD) are LID. Arginine 127 serves as a coordination point for ATP. Residue arginine 140 coordinates AMP. An ATP-binding site is contributed by proline 168.

It belongs to the adenylate kinase family. Monomer.

Its subcellular location is the cytoplasm. The catalysed reaction is AMP + ATP = 2 ADP. It functions in the pathway purine metabolism; AMP biosynthesis via salvage pathway; AMP from ADP: step 1/1. Its function is as follows. Catalyzes the reversible transfer of the terminal phosphate group between ATP and AMP. Plays an important role in cellular energy homeostasis and in adenine nucleotide metabolism. This chain is Adenylate kinase 2, found in Synechocystis sp. (strain ATCC 27184 / PCC 6803 / Kazusa).